Consider the following 384-residue polypeptide: S-adenosylmethionine synthase (384 aa).

An ATP-binding site is contributed by H15. D17 contributes to the Mg(2+) binding site. K(+) is bound at residue E43. 2 residues coordinate L-methionine: E56 and Q99. The flexible loop stretch occupies residues Q99–R109. ATP-binding positions include D164–K166, R230–F231, D239, R245–K246, A262, and K266. D239 lines the L-methionine pocket. An L-methionine-binding site is contributed by K270.

It belongs to the AdoMet synthase family. Homotetramer; dimer of dimers. It depends on Mg(2+) as a cofactor. K(+) serves as cofactor.

The protein resides in the cytoplasm. The catalysed reaction is L-methionine + ATP + H2O = S-adenosyl-L-methionine + phosphate + diphosphate. The protein operates within amino-acid biosynthesis; S-adenosyl-L-methionine biosynthesis; S-adenosyl-L-methionine from L-methionine: step 1/1. Its function is as follows. Catalyzes the formation of S-adenosylmethionine (AdoMet) from methionine and ATP. The overall synthetic reaction is composed of two sequential steps, AdoMet formation and the subsequent tripolyphosphate hydrolysis which occurs prior to release of AdoMet from the enzyme. The chain is S-adenosylmethionine synthase from Cronobacter sakazakii (strain ATCC BAA-894) (Enterobacter sakazakii).